Here is a 293-residue protein sequence, read N- to C-terminus: Probable endonuclease 4 (293 aa).

Positions 78, 118, 154, 188, 191, 225, 238, 240, and 270 each coordinate Zn(2+).

The protein belongs to the AP endonuclease 2 family. The cofactor is Zn(2+).

The catalysed reaction is Endonucleolytic cleavage to 5'-phosphooligonucleotide end-products.. Its function is as follows. Endonuclease IV plays a role in DNA repair. It cleaves phosphodiester bonds at apurinic or apyrimidinic (AP) sites, generating a 3'-hydroxyl group and a 5'-terminal sugar phosphate. The sequence is that of Probable endonuclease 4 from Vibrio vulnificus (strain YJ016).